The primary structure comprises 348 residues: Protein RecA (348 aa).

64–71 is an ATP binding site; it reads GPESSGKT. Residues 325–335 are compositionally biased toward basic and acidic residues; sequence YEIDGASKEPL. Positions 325-348 are disordered; sequence YEIDGASKEPLEETEETLSLLDDE. A compositionally biased stretch (acidic residues) spans 336–348; sequence EETEETLSLLDDE.

This sequence belongs to the RecA family.

The protein resides in the cytoplasm. Can catalyze the hydrolysis of ATP in the presence of single-stranded DNA, the ATP-dependent uptake of single-stranded DNA by duplex DNA, and the ATP-dependent hybridization of homologous single-stranded DNAs. It interacts with LexA causing its activation and leading to its autocatalytic cleavage. The polypeptide is Protein RecA (Listeria seeligeri).